We begin with the raw amino-acid sequence, 122 residues long: Large ribosomal subunit protein uL18 (122 aa).

It belongs to the universal ribosomal protein uL18 family. As to quaternary structure, part of the 50S ribosomal subunit; part of the 5S rRNA/L5/L18/L25 subcomplex. Contacts the 5S and 23S rRNAs.

This is one of the proteins that bind and probably mediate the attachment of the 5S RNA into the large ribosomal subunit, where it forms part of the central protuberance. This chain is Large ribosomal subunit protein uL18, found in Pseudothermotoga lettingae (strain ATCC BAA-301 / DSM 14385 / NBRC 107922 / TMO) (Thermotoga lettingae).